A 1619-amino-acid chain; its full sequence is ATP-dependent helicase ULS1 (1619 aa).

The SUMO interacting motif; type a 1 motif lies at 7-10; sequence IDLT. The span at 86-102 shows a compositional bias: polar residues; that stretch reads STFNNEKSSNEVKQQQV. 4 disordered regions span residues 86–123, 200–279, 347–371, and 429–450; these read STFNNEKSSNEVKQQQVLKEETMGSSNDEKKTQESSPS, NNKP…VESS, PILPSKNMDHTTHNSHDSEQKNSSI, and SGSNSIPTSETDAQSSSSSVLQ. A compositionally biased stretch (basic and acidic residues) spans 103 to 118; that stretch reads LKEETMGSSNDEKKTQ. Serine 121 carries the phosphoserine modification. Positions 200 to 210 are enriched in polar residues; that stretch reads NNKPSQQQFSD. Basic and acidic residues predominate over residues 211 to 226; the sequence is PETKDNSLKSENKDQI. 2 stretches are compositionally biased toward polar residues: residues 242–259 and 269–279; these read SAFQDSETQNNSKNTIPN and LPSNLSSVESS. Residues 353–366 show a composition bias toward basic and acidic residues; it reads NMDHTTHNSHDSEQ. The SUMO interacting motif; type b 1 motif lies at 371–378; sequence IIILSDED. The SUMO interacting motif; type a 2 motif lies at 470–473; sequence LDTL. Residues 543-550 carry the SUMO interacting motif; type b 2 motif; that stretch reads ILVDEAEN. The Helicase ATP-binding domain occupies 956–1157; it reads QVENSAKKGG…YSLIRFLRIP (202 aa). 969–976 is a binding site for ATP; sequence DDMGLGKT. Residues 1330 to 1386 form an RING-type zinc finger; sequence CFWCMEQLEPEAMSVLTGCGHLICDTCIEPFIEESSMLPQAKKTKGGAFAIPCKDCQ. One can recognise a Helicase C-terminal domain in the interval 1447 to 1606; the sequence is QCIQVIQRVF…GKIKEVNSLG (160 aa).

Belongs to the SNF2/RAD54 helicase family. As to quaternary structure, interacts with CDC3, CDC11, EBP2, SIR4, UBC4 and SUMO/SMT3.

The protein resides in the nucleus. ATP-dependent helicase involved mating type switching and in silencing interference through its interaction with the silencing regulator SIR4. Cooperates with UBC4 and UBC5 to mediate ubiquitination of SUMO conjugates. The protein is ATP-dependent helicase ULS1 (ULS1) of Saccharomyces cerevisiae (strain ATCC 204508 / S288c) (Baker's yeast).